A 683-amino-acid chain; its full sequence is Multidrug resistance protein MdtO (683 aa).

9 helical membrane-spanning segments follow: residues 43-63 (VILI…AVLF), 75-95 (FVAI…FLIY), 100-120 (GEPL…MFLM), 125-145 (LGLV…FPAM), 158-178 (WCIV…VLWF), 402-422 (FGGA…VMPW), 426-446 (IVEL…IATS), 457-477 (MVVT…YDLV), and 483-503 (ALGI…VWPE).

It belongs to the MdtO family. Could be part of a tripartite efflux system composed of MdtN, MdtO and MdtP.

The protein resides in the cell inner membrane. Functionally, could be involved in resistance to puromycin, acriflavine and tetraphenylarsonium chloride. The protein is Multidrug resistance protein MdtO (mdtO) of Escherichia coli O6:H1 (strain CFT073 / ATCC 700928 / UPEC).